The following is a 356-amino-acid chain: Protein RecA (356 aa).

68–75 (GQESSGKT) contributes to the ATP binding site.

Belongs to the RecA family.

Its subcellular location is the cytoplasm. Its function is as follows. Can catalyze the hydrolysis of ATP in the presence of single-stranded DNA, the ATP-dependent uptake of single-stranded DNA by duplex DNA, and the ATP-dependent hybridization of homologous single-stranded DNAs. It interacts with LexA causing its activation and leading to its autocatalytic cleavage. This Thermotoga petrophila (strain ATCC BAA-488 / DSM 13995 / JCM 10881 / RKU-1) protein is Protein RecA.